Consider the following 115-residue polypeptide: Nucleoid-associated protein Npun_F0448 (115 aa).

The protein belongs to the YbaB/EbfC family. Homodimer.

Its subcellular location is the cytoplasm. The protein resides in the nucleoid. Binds to DNA and alters its conformation. May be involved in regulation of gene expression, nucleoid organization and DNA protection. This is Nucleoid-associated protein Npun_F0448 from Nostoc punctiforme (strain ATCC 29133 / PCC 73102).